The following is a 452-amino-acid chain: Tripartite motif-containing protein 49D (452 aa).

The RING-type zinc-finger motif lies at 15-56; sequence CPICLNYFIDPVTIDCGHSFCRPCFYLNWQDIPILTQCFECL. The segment at 88–129 adopts a B box-type zinc-finger fold; sequence SEEQMCGTHRETKKIFCEVDRSLLCLLCSSSLEHRYHRHCPA. Positions 93, 96, 115, and 121 each coordinate Zn(2+). The B30.2/SPRY domain maps to 269-452; that stretch reads ELRAGPITGL…LRPIFCCVHL (184 aa).

The protein belongs to the TRIM/RBCC family.

This is Tripartite motif-containing protein 49D from Homo sapiens (Human).